A 315-amino-acid polypeptide reads, in one-letter code: MKVNVDMNSGFCFGVQFAIDRVEDEMKASGPLYSLGDIVHNAVEVERLEKLGLKTITIEEFKTLKNTRVFIRAHGEPPSTYKLALENNIELIDATCPVVMKLQQRIKEFYDRGYQVLIYGREGHPEVIGLCGQCNNEAIVLKHADLSDRGETEKIDFSRKTVLFSQTTKDTTGFYELKANLENVFREHHAAQNFDSAATESIVPDFQAKDTICRQVSNRDQKLAAFSKENECVIFVAGRKSSNGKVLFEVCKDANSNTHFIENQSELERAWFLRPDDSLVESVGVCGATSTPMWVMQQVAEHIRATFAAERFVQS.

Position 12 (C12) interacts with [4Fe-4S] cluster. 2 residues coordinate (2E)-4-hydroxy-3-methylbut-2-enyl diphosphate: H40 and H74. 2 residues coordinate dimethylallyl diphosphate: H40 and H74. The isopentenyl diphosphate site is built by H40 and H74. C96 provides a ligand contact to [4Fe-4S] cluster. H124 contacts (2E)-4-hydroxy-3-methylbut-2-enyl diphosphate. H124 is a binding site for dimethylallyl diphosphate. H124 contributes to the isopentenyl diphosphate binding site. Residue E126 is the Proton donor of the active site. T167 is a binding site for (2E)-4-hydroxy-3-methylbut-2-enyl diphosphate. [4Fe-4S] cluster is bound at residue C213. (2E)-4-hydroxy-3-methylbut-2-enyl diphosphate is bound by residues S241, S242, N243, and S290. Dimethylallyl diphosphate is bound by residues S241, S242, N243, and S290. Isopentenyl diphosphate-binding residues include S241, S242, N243, and S290.

The protein belongs to the IspH family. It depends on [4Fe-4S] cluster as a cofactor.

It carries out the reaction isopentenyl diphosphate + 2 oxidized [2Fe-2S]-[ferredoxin] + H2O = (2E)-4-hydroxy-3-methylbut-2-enyl diphosphate + 2 reduced [2Fe-2S]-[ferredoxin] + 2 H(+). The enzyme catalyses dimethylallyl diphosphate + 2 oxidized [2Fe-2S]-[ferredoxin] + H2O = (2E)-4-hydroxy-3-methylbut-2-enyl diphosphate + 2 reduced [2Fe-2S]-[ferredoxin] + 2 H(+). Its pathway is isoprenoid biosynthesis; dimethylallyl diphosphate biosynthesis; dimethylallyl diphosphate from (2E)-4-hydroxy-3-methylbutenyl diphosphate: step 1/1. It participates in isoprenoid biosynthesis; isopentenyl diphosphate biosynthesis via DXP pathway; isopentenyl diphosphate from 1-deoxy-D-xylulose 5-phosphate: step 6/6. Catalyzes the conversion of 1-hydroxy-2-methyl-2-(E)-butenyl 4-diphosphate (HMBPP) into a mixture of isopentenyl diphosphate (IPP) and dimethylallyl diphosphate (DMAPP). Acts in the terminal step of the DOXP/MEP pathway for isoprenoid precursor biosynthesis. The chain is 4-hydroxy-3-methylbut-2-enyl diphosphate reductase from Chloroherpeton thalassium (strain ATCC 35110 / GB-78).